The sequence spans 89 residues: MSLSTEAKAKILAEFGRGENDTGSTEVQVALLTAQINHLQDHFKTHIHDHHSRRGLLRMVSSRRKLLSYLQRTENERYNALIQKLGLRR.

It belongs to the universal ribosomal protein uS15 family. Part of the 30S ribosomal subunit. Forms a bridge to the 50S subunit in the 70S ribosome, contacting the 23S rRNA.

One of the primary rRNA binding proteins, it binds directly to 16S rRNA where it helps nucleate assembly of the platform of the 30S subunit by binding and bridging several RNA helices of the 16S rRNA. Its function is as follows. Forms an intersubunit bridge (bridge B4) with the 23S rRNA of the 50S subunit in the ribosome. This chain is Small ribosomal subunit protein uS15, found in Shewanella amazonensis (strain ATCC BAA-1098 / SB2B).